A 679-amino-acid polypeptide reads, in one-letter code: E3 ubiquitin ligase RNF157 (679 aa).

Glycine 2 is lipidated: N-myristoyl glycine. An RING-type zinc finger spans residues 277-316; it reads CVVCLSDVRDTLILPCRHLCLCNTCADTLRYQANNCPICR. Residues 329–332 carry the D-box 1 motif; it reads RKKL. 2 stretches are compositionally biased toward polar residues: residues 339-349 and 478-537; these read SFNPIISSQTS and ESEN…SMSG. Disordered regions lie at residues 339 to 362, 416 to 604, and 650 to 679; these read SFNPIISSQTSDSEEHPSSENIPP, LDRL…TQEG, and VSRNAQRRRLSSSSLEDSETRPCVWGPLAV. The span at 585–598 shows a compositional bias: acidic residues; sequence QDAEGNDVIEEEDG. Positions 656–659 match the D-box 2 motif; the sequence is RRRL. Phosphoserine occurs at positions 660, 661, 662, and 663.

Interacts with APBB1. Interacts with CHD1; CHD1-binding controls RNF157 stability. Interacts with ATRN, MEGF8, TECR, MSI2, PLRG1, BYSL, MTERF3, PSMA1, MRPS18B, PRPF4, FASTKD2, SLC25A1, SMU1, CNOT9, MRPS2, MAGT1, FXR2, EMD, PSMD8, HDAC1, RAN, HSD17B12, TXNDC5 and MRPL19. Phosphorylation at Ser-660, Ser-661, Ser-662 and Ser-663 downstream of the PI3K and MAPK pathways influences the E3 ligase activity and stability of RNF157 during the cell cycle in an anaphase-promoting complex/cyclosome-CDH1-dependent manner.

It is found in the cytoplasm. The enzyme catalyses S-ubiquitinyl-[E2 ubiquitin-conjugating enzyme]-L-cysteine + [acceptor protein]-L-lysine = [E2 ubiquitin-conjugating enzyme]-L-cysteine + N(6)-ubiquitinyl-[acceptor protein]-L-lysine.. Its function is as follows. E3 ubiquitin ligase that ubiquitinates APBB1 for its degradation by the proteasome and thus prevents apoptosis and promotes survival of neurons. Has a dual role in neurons as it is also required for dendrite growth and maintenance for which its ligase activity is not critical. May act as a scaffold molecule to regulate this process. Acts as a downstream effector of the interconnected PI3K and MAPK signaling pathways and thus participates in the regulation of the cell cycle. This Homo sapiens (Human) protein is E3 ubiquitin ligase RNF157 (RNF157).